A 1085-amino-acid chain; its full sequence is Error-prone DNA polymerase (1085 aa).

The protein belongs to the DNA polymerase type-C family. DnaE2 subfamily.

It localises to the cytoplasm. The catalysed reaction is DNA(n) + a 2'-deoxyribonucleoside 5'-triphosphate = DNA(n+1) + diphosphate. In terms of biological role, DNA polymerase involved in damage-induced mutagenesis and translesion synthesis (TLS). It is not the major replicative DNA polymerase. This Symbiobacterium thermophilum (strain DSM 24528 / JCM 14929 / IAM 14863 / T) protein is Error-prone DNA polymerase.